Reading from the N-terminus, the 337-residue chain is Ketol-acid reductoisomerase (NADP(+)) (337 aa).

Residues 3–183 (VEMFYDDDAD…GGTRAGVIKT (181 aa)) form the KARI N-terminal Rossmann domain. NADP(+) contacts are provided by residues 26-29 (YGSQ), Ser52, Ser54, and 84-87 (DTAQ). The active site involves His109. Gly135 serves as a coordination point for NADP(+). The KARI C-terminal knotted domain maps to 184-329 (TFKEETETDL…AKLRGLMSWV (146 aa)). Residues Asp192, Glu196, Glu228, and Glu232 each coordinate Mg(2+). Residue Ser253 coordinates substrate.

This sequence belongs to the ketol-acid reductoisomerase family. The cofactor is Mg(2+).

The catalysed reaction is (2R)-2,3-dihydroxy-3-methylbutanoate + NADP(+) = (2S)-2-acetolactate + NADPH + H(+). It catalyses the reaction (2R,3R)-2,3-dihydroxy-3-methylpentanoate + NADP(+) = (S)-2-ethyl-2-hydroxy-3-oxobutanoate + NADPH + H(+). The protein operates within amino-acid biosynthesis; L-isoleucine biosynthesis; L-isoleucine from 2-oxobutanoate: step 2/4. Its pathway is amino-acid biosynthesis; L-valine biosynthesis; L-valine from pyruvate: step 2/4. In terms of biological role, involved in the biosynthesis of branched-chain amino acids (BCAA). Catalyzes an alkyl-migration followed by a ketol-acid reduction of (S)-2-acetolactate (S2AL) to yield (R)-2,3-dihydroxy-isovalerate. In the isomerase reaction, S2AL is rearranged via a Mg-dependent methyl migration to produce 3-hydroxy-3-methyl-2-ketobutyrate (HMKB). In the reductase reaction, this 2-ketoacid undergoes a metal-dependent reduction by NADPH to yield (R)-2,3-dihydroxy-isovalerate. This Nocardia farcinica (strain IFM 10152) protein is Ketol-acid reductoisomerase (NADP(+)).